The following is a 56-amino-acid chain: Small ribosomal subunit protein uS14 (56 aa).

4 residues coordinate Zn(2+): C21, C24, C39, and C42.

Belongs to the universal ribosomal protein uS14 family. Zinc-binding uS14 subfamily. As to quaternary structure, part of the 30S ribosomal subunit. Zn(2+) is required as a cofactor.

In terms of biological role, binds 16S rRNA, required for the assembly of 30S particles. The protein is Small ribosomal subunit protein uS14 of Pyrococcus furiosus (strain ATCC 43587 / DSM 3638 / JCM 8422 / Vc1).